Reading from the N-terminus, the 292-residue chain is Probable serine/threonine-protein kinase FPV226 (292 aa).

A Protein kinase domain is found at 14 to 292 (WKIDKLIGCG…DLLRQLVNSL (279 aa)). ATP is bound by residues 20–28 (IGCGGFGCV) and lysine 43. Aspartate 147 serves as the catalytic Proton acceptor.

This sequence belongs to the protein kinase superfamily. Ser/Thr protein kinase family. Poxviruses subfamily.

It carries out the reaction L-seryl-[protein] + ATP = O-phospho-L-seryl-[protein] + ADP + H(+). The catalysed reaction is L-threonyl-[protein] + ATP = O-phospho-L-threonyl-[protein] + ADP + H(+). This is Probable serine/threonine-protein kinase FPV226 from Vertebrata (FPV).